A 182-amino-acid chain; its full sequence is Protein canopy homolog 2 (182 aa).

An N-terminal signal peptide occupies residues 1-20; it reads MKGWGWLALLLGVLLGTAWA. The Saposin B-type domain maps to 24 to 175; sequence QDLHCGACRA…KRTDLCDHAL (152 aa). 3 cysteine pairs are disulfide-bonded: cysteine 28/cysteine 171, cysteine 31/cysteine 164, and cysteine 86/cysteine 137. Serine 115 carries the phosphoserine modification. The Prevents secretion from ER motif lies at 179–182; the sequence is HDEL.

This sequence belongs to the canopy family. Interacts with MYLIP/MIR.

The protein resides in the endoplasmic reticulum. Positive regulator of neurite outgrowth by stabilizing myosin regulatory light chain (MRLC). It prevents MIR-mediated MRLC ubiquitination and its subsequent proteasomal degradation. This chain is Protein canopy homolog 2 (Cnpy2), found in Mus musculus (Mouse).